Reading from the N-terminus, the 432-residue chain is EF-hand calcium-binding domain-containing protein 3 (432 aa).

EF-hand domains are found at residues 45-80 and 81-116; these read AQLEAFRNAYNFFTKDRTGCIDSHGLISTIAKLGMN and LNTYDIYNELKCADLDRDGKINFSDFINVLTDKKLF. Ca(2+)-binding residues include Asp-94, Asp-96, Asp-98, Lys-100, and Asp-105. A Phosphotyrosine modification is found at Tyr-273. The disordered stretch occupies residues 394–432; it reads SMNKSSPSNSGLSSPSDFSESDPETGRKRKRKSSRGFRQ. Positions 395–411 are enriched in low complexity; the sequence is MNKSSPSNSGLSSPSDF. Basic residues predominate over residues 420–432; it reads RKRKRKSSRGFRQ.

This Mus musculus (Mouse) protein is EF-hand calcium-binding domain-containing protein 3 (Efcab3).